A 223-amino-acid polypeptide reads, in one-letter code: N-terminal Xaa-Pro-Lys N-methyltransferase 1 (223 aa).

Met-1 carries the N-acetylmethionine modification. At Thr-2 the chain carries N-acetylthreonine; in N-terminal Xaa-Pro-Lys N-methyltransferase 1, N-terminally processed. S-adenosyl-L-methionine-binding positions include Gly-69, Arg-74, 91–93 (DVT), 119–120 (LQ), and Gln-135.

It belongs to the methyltransferase superfamily. NTM1 family.

It is found in the nucleus. The catalysed reaction is N-terminal L-alanyl-L-prolyl-L-lysyl-[protein] + 3 S-adenosyl-L-methionine = N-terminal N,N,N-trimethyl-L-alanyl-L-prolyl-L-lysyl-[protein] + 3 S-adenosyl-L-homocysteine + 3 H(+). It carries out the reaction N-terminal L-seryl-L-prolyl-L-lysyl-[protein] + 3 S-adenosyl-L-methionine = N-terminal N,N,N-trimethyl-L-seryl-L-prolyl-L-lysyl-[protein] + 3 S-adenosyl-L-homocysteine + 3 H(+). It catalyses the reaction N-terminal L-prolyl-L-prolyl-L-lysyl-[protein] + 2 S-adenosyl-L-methionine = N-terminal N,N-dimethyl-L-prolyl-L-prolyl-L-lysyl-[protein] + 2 S-adenosyl-L-homocysteine + 2 H(+). In terms of biological role, distributive alpha-N-methyltransferase that methylates the N-terminus of target proteins containing the N-terminal motif [Ala/Gly/Pro/Ser]-Pro-Lys when the initiator Met is cleaved. Specifically catalyzes mono-, di- or tri-methylation of the exposed alpha-amino group of the Ala, Gly or Ser residue in the [Ala/Gly/Ser]-Pro-Lys motif and mono- or di-methylation of Pro in the Pro-Pro-Lys motif. Some of the substrates may be primed by NTMT2-mediated monomethylation. Catalyzes the trimethylation of the N-terminal Gly in CENPA (after removal of Met-1). Responsible for the N-terminal methylation of KLHL31, MYL2, MYL3, RB1, RCC1, RPL23A and SET. Required during mitosis for normal bipolar spindle formation and chromosome segregation via its action on RCC1. The sequence is that of N-terminal Xaa-Pro-Lys N-methyltransferase 1 (Ntmt1) from Rattus norvegicus (Rat).